The following is a 205-amino-acid chain: Cyanate hydratase (205 aa).

Active-site residues include arginine 133, glutamate 136, and serine 159.

The protein belongs to the cyanase family.

The catalysed reaction is cyanate + hydrogencarbonate + 3 H(+) = NH4(+) + 2 CO2. In terms of biological role, catalyzes the reaction of cyanate with bicarbonate to produce ammonia and carbon dioxide. The polypeptide is Cyanate hydratase (Thalassiosira pseudonana (Marine diatom)).